A 404-amino-acid chain; its full sequence is Phosphopentomutase (404 aa).

Residues aspartate 10, aspartate 303, histidine 308, aspartate 344, histidine 345, and histidine 356 each contribute to the Mn(2+) site.

This sequence belongs to the phosphopentomutase family. The cofactor is Mn(2+).

It localises to the cytoplasm. It catalyses the reaction 2-deoxy-alpha-D-ribose 1-phosphate = 2-deoxy-D-ribose 5-phosphate. The enzyme catalyses alpha-D-ribose 1-phosphate = D-ribose 5-phosphate. The protein operates within carbohydrate degradation; 2-deoxy-D-ribose 1-phosphate degradation; D-glyceraldehyde 3-phosphate and acetaldehyde from 2-deoxy-alpha-D-ribose 1-phosphate: step 1/2. Functionally, isomerase that catalyzes the conversion of deoxy-ribose 1-phosphate (dRib-1-P) and ribose 1-phosphate (Rib-1-P) to deoxy-ribose 5-phosphate (dRib-5-P) and ribose 5-phosphate (Rib-5-P), respectively. The sequence is that of Phosphopentomutase from Shewanella sp. (strain MR-7).